The following is a 131-amino-acid chain: Small ribosomal subunit protein uS19 (131 aa).

Belongs to the universal ribosomal protein uS19 family.

Its function is as follows. Protein S19 forms a complex with S13 that binds strongly to the 16S ribosomal RNA. This Nitrosopumilus maritimus (strain SCM1) protein is Small ribosomal subunit protein uS19.